A 450-amino-acid chain; its full sequence is Acyltransferase GLAUCE (450 aa).

Active-site proton acceptor residues include histidine 171 and glutamate 394.

It belongs to the plant acyltransferase family. Restricted to the central cells of embryo sacs.

The protein resides in the cytoplasm. It is found in the nucleus. Functionally, required for double fertilization of the egg cell and the central cell by two sperm cells, resulting in the formation of the embryo and the endosperm. Involved in the regulation of embryonic expression of PHE1. Essential in maternal tissues to ensure the paternal embryonic expression of several genes, including RPS5a and FAC1, both of which being essential for early embryo and endosperm development in fertilized seeds. This chain is Acyltransferase GLAUCE, found in Arabidopsis thaliana (Mouse-ear cress).